Reading from the N-terminus, the 188-residue chain is GTP cyclohydrolase 1 (188 aa).

Positions 76, 79, and 148 each coordinate Zn(2+).

This sequence belongs to the GTP cyclohydrolase I family. As to quaternary structure, toroid-shaped homodecamer, composed of two pentamers of five dimers.

The catalysed reaction is GTP + H2O = 7,8-dihydroneopterin 3'-triphosphate + formate + H(+). It participates in cofactor biosynthesis; 7,8-dihydroneopterin triphosphate biosynthesis; 7,8-dihydroneopterin triphosphate from GTP: step 1/1. The polypeptide is GTP cyclohydrolase 1 (Caldanaerobacter subterraneus subsp. tengcongensis (strain DSM 15242 / JCM 11007 / NBRC 100824 / MB4) (Thermoanaerobacter tengcongensis)).